Reading from the N-terminus, the 168-residue chain is Peptidyl-Lys metalloendopeptidase (168 aa).

2 cysteine pairs are disulfide-bonded: cysteine 6/cysteine 76 and cysteine 78/cysteine 98. Histidine 118 lines the Zn(2+) pocket. Glutamate 119 is an active-site residue. Residues histidine 122 and aspartate 131 each contribute to the Zn(2+) site.

Zn(2+) serves as cofactor.

The protein resides in the secreted. It catalyses the reaction Preferential cleavage in proteins: -Xaa-|-Lys- (in which Xaa may be Pro).. With respect to regulation, inhibited by chelating agents such as EDTA and 1,10-phenanthroline. This Pleurotus ostreatus (Oyster mushroom) protein is Peptidyl-Lys metalloendopeptidase (MEP).